The primary structure comprises 555 residues: Urocanate hydratase (555 aa).

NAD(+)-binding positions include 51 to 52 (GG), Gln129, 175 to 177 (GMG), Glu195, 262 to 266 (QTSAH), 272 to 273 (YL), and Tyr321. Cys409 is a catalytic residue. Gly491 provides a ligand contact to NAD(+).

The protein belongs to the urocanase family. NAD(+) serves as cofactor.

It localises to the cytoplasm. It catalyses the reaction 4-imidazolone-5-propanoate = trans-urocanate + H2O. It functions in the pathway amino-acid degradation; L-histidine degradation into L-glutamate; N-formimidoyl-L-glutamate from L-histidine: step 2/3. In terms of biological role, catalyzes the conversion of urocanate to 4-imidazolone-5-propionate. The sequence is that of Urocanate hydratase from Xanthomonas campestris pv. campestris (strain ATCC 33913 / DSM 3586 / NCPPB 528 / LMG 568 / P 25).